Consider the following 812-residue polypeptide: E3 UFM1-protein ligase 1 homolog (812 aa).

The tract at residues 389–495 (IKHSAGQGKP…KTKEDNTNIF (107 aa)) is disordered. Composition is skewed to basic and acidic residues over residues 403–415 (SEHR…KDLG) and 475–491 (DAKH…KEDN).

It belongs to the UFL1 family.

In terms of biological role, E3 UFM1-protein ligase that mediates ufmylation of target proteins. The polypeptide is E3 UFM1-protein ligase 1 homolog (Oryza sativa subsp. indica (Rice)).